We begin with the raw amino-acid sequence, 121 residues long: Glycine cleavage system H protein (121 aa).

The region spanning valine 16–lysine 98 is the Lipoyl-binding domain. N6-lipoyllysine is present on lysine 57.

The protein belongs to the GcvH family. The glycine cleavage system is composed of four proteins: P, T, L and H. It depends on (R)-lipoate as a cofactor.

In terms of biological role, the glycine cleavage system catalyzes the degradation of glycine. The H protein shuttles the methylamine group of glycine from the P protein to the T protein. This Caulobacter vibrioides (strain NA1000 / CB15N) (Caulobacter crescentus) protein is Glycine cleavage system H protein.